The primary structure comprises 147 residues: Large ribosomal subunit protein bL9 (147 aa).

Belongs to the bacterial ribosomal protein bL9 family.

In terms of biological role, binds to the 23S rRNA. The sequence is that of Large ribosomal subunit protein bL9 from Myxococcus xanthus (strain DK1622).